A 496-amino-acid polypeptide reads, in one-letter code: Probable CtpA-like serine protease (496 aa).

Residues 1 to 16 (MDDKQHTTSSDDERAE) are compositionally biased toward basic and acidic residues. Positions 1–27 (MDDKQHTTSSDDERAENATSNQDQQTN) are disordered. Positions 17-27 (NATSNQDQQTN) are enriched in polar residues. Residues 39–59 (FISILIGTIIITAVITVVAYI) traverse the membrane as a helical segment. The PDZ domain maps to 124–206 (TKSFNEGVSG…TEVTLTVQRG (83 aa)). Catalysis depends on charge relay system residues Ser329, Asp340, and Lys354.

This sequence belongs to the peptidase S41A family.

The protein resides in the cell membrane. The polypeptide is Probable CtpA-like serine protease (Staphylococcus aureus (strain MRSA252)).